Consider the following 230-residue polypeptide: 2,3-bisphosphoglycerate-dependent phosphoglycerate mutase (230 aa).

Substrate-binding positions include 8–15 (RHGESEWN), 21–22 (TG), Arg60, 87–90 (ERHY), Lys98, 114–115 (RR), and 183–184 (GN). His9 functions as the Tele-phosphohistidine intermediate in the catalytic mechanism. Glu87 serves as the catalytic Proton donor/acceptor.

It belongs to the phosphoglycerate mutase family. BPG-dependent PGAM subfamily.

It catalyses the reaction (2R)-2-phosphoglycerate = (2R)-3-phosphoglycerate. The protein operates within carbohydrate degradation; glycolysis; pyruvate from D-glyceraldehyde 3-phosphate: step 3/5. Catalyzes the interconversion of 2-phosphoglycerate and 3-phosphoglycerate. The polypeptide is 2,3-bisphosphoglycerate-dependent phosphoglycerate mutase (Streptococcus mutans serotype c (strain ATCC 700610 / UA159)).